Here is a 75-residue protein sequence, read N- to C-terminus: Small ribosomal subunit protein bS18 (75 aa).

Belongs to the bacterial ribosomal protein bS18 family. In terms of assembly, part of the 30S ribosomal subunit. Forms a tight heterodimer with protein bS6.

In terms of biological role, binds as a heterodimer with protein bS6 to the central domain of the 16S rRNA, where it helps stabilize the platform of the 30S subunit. This chain is Small ribosomal subunit protein bS18, found in Pseudoalteromonas atlantica (strain T6c / ATCC BAA-1087).